A 97-amino-acid polypeptide reads, in one-letter code: High mobility group protein homolog NHP1 (97 aa).

Residues 1–24 (MAGASDRTGVRRPRKAKKDPNAPK) are disordered. A DNA-binding region (HMG box) is located at residues 23-93 (PKRALSSYMF…RYEREKAEYA (71 aa)).

The protein localises to the nucleus. This chain is High mobility group protein homolog NHP1, found in Babesia bovis.